Reading from the N-terminus, the 379-residue chain is Succinate--CoA ligase [ADP-forming] subunit beta (379 aa).

The ATP-grasp domain maps to 9–235 (KEIAKNNGIP…GRELSEMEAI (227 aa)). ATP contacts are provided by Lys45, Glu91, Ile94, and Glu99. Mg(2+)-binding residues include Asn191 and Asp205. Substrate is bound by residues Asn255 and 312–314 (GIT).

The protein belongs to the succinate/malate CoA ligase beta subunit family. Heterotetramer of two alpha and two beta subunits. Requires Mg(2+) as cofactor.

It carries out the reaction succinate + ATP + CoA = succinyl-CoA + ADP + phosphate. The catalysed reaction is GTP + succinate + CoA = succinyl-CoA + GDP + phosphate. It participates in carbohydrate metabolism; tricarboxylic acid cycle; succinate from succinyl-CoA (ligase route): step 1/1. Succinyl-CoA synthetase functions in the citric acid cycle (TCA), coupling the hydrolysis of succinyl-CoA to the synthesis of either ATP or GTP and thus represents the only step of substrate-level phosphorylation in the TCA. The beta subunit provides nucleotide specificity of the enzyme and binds the substrate succinate, while the binding sites for coenzyme A and phosphate are found in the alpha subunit. The sequence is that of Succinate--CoA ligase [ADP-forming] subunit beta from Staphylothermus marinus (strain ATCC 43588 / DSM 3639 / JCM 9404 / F1).